The following is a 360-amino-acid chain: GTPase Obg (360 aa).

The Obg domain occupies 1–156 (MFVDSVEIII…KCVRLELKLI (156 aa)). An OBG-type G domain is found at 157–360 (ADIGLVGFPN…LKFVLLKALP (204 aa)). Residues 163–170 (GFPNAGKS), 188–192 (FTTLV), 210–213 (DIPG), 279–282 (NKCD), and 341–343 (SAV) each bind GTP. Positions 170 and 190 each coordinate Mg(2+).

It belongs to the TRAFAC class OBG-HflX-like GTPase superfamily. OBG GTPase family. In terms of assembly, monomer. The cofactor is Mg(2+).

It is found in the cytoplasm. An essential GTPase which binds GTP, GDP and possibly (p)ppGpp with moderate affinity, with high nucleotide exchange rates and a fairly low GTP hydrolysis rate. Plays a role in control of the cell cycle, stress response, ribosome biogenesis and in those bacteria that undergo differentiation, in morphogenesis control. The sequence is that of GTPase Obg from Helicobacter pylori (strain G27).